Here is a 106-residue protein sequence, read N- to C-terminus: Large ribosomal subunit protein bL21 (106 aa).

It belongs to the bacterial ribosomal protein bL21 family. As to quaternary structure, part of the 50S ribosomal subunit. Contacts protein L20.

Functionally, this protein binds to 23S rRNA in the presence of protein L20. This Streptomyces coelicolor (strain ATCC BAA-471 / A3(2) / M145) protein is Large ribosomal subunit protein bL21.